The following is a 1167-amino-acid chain: DNA-directed RNA polymerase subunit beta (1167 aa).

This sequence belongs to the RNA polymerase beta chain family. As to quaternary structure, the RNAP catalytic core consists of 2 alpha, 1 beta, 1 beta' and 1 omega subunit. When a sigma factor is associated with the core the holoenzyme is formed, which can initiate transcription.

The catalysed reaction is RNA(n) + a ribonucleoside 5'-triphosphate = RNA(n+1) + diphosphate. DNA-dependent RNA polymerase catalyzes the transcription of DNA into RNA using the four ribonucleoside triphosphates as substrates. The chain is DNA-directed RNA polymerase subunit beta from Treponema denticola (strain ATCC 35405 / DSM 14222 / CIP 103919 / JCM 8153 / KCTC 15104).